The primary structure comprises 384 residues: S-adenosylmethionine synthase (384 aa).

H15 serves as a coordination point for ATP. Residue D17 participates in Mg(2+) binding. A K(+)-binding site is contributed by E43. E56 and Q99 together coordinate L-methionine. The tract at residues 99 to 109 is flexible loop; it reads QSPDINQGVDK. Residues 164–166, 230–231, D239, 245–246, A262, and K266 contribute to the ATP site; these read DAK, RF, and RK. Residue D239 coordinates L-methionine. K270 is an L-methionine binding site.

Belongs to the AdoMet synthase family. Homotetramer; dimer of dimers. Requires Mg(2+) as cofactor. K(+) is required as a cofactor.

The protein localises to the cytoplasm. The enzyme catalyses L-methionine + ATP + H2O = S-adenosyl-L-methionine + phosphate + diphosphate. Its pathway is amino-acid biosynthesis; S-adenosyl-L-methionine biosynthesis; S-adenosyl-L-methionine from L-methionine: step 1/1. Catalyzes the formation of S-adenosylmethionine (AdoMet) from methionine and ATP. The overall synthetic reaction is composed of two sequential steps, AdoMet formation and the subsequent tripolyphosphate hydrolysis which occurs prior to release of AdoMet from the enzyme. In Aliivibrio fischeri (strain ATCC 700601 / ES114) (Vibrio fischeri), this protein is S-adenosylmethionine synthase.